The chain runs to 85 residues: Large ribosomal subunit protein bL31B (85 aa).

It belongs to the bacterial ribosomal protein bL31 family. Type B subfamily. As to quaternary structure, part of the 50S ribosomal subunit.

In Macrococcus caseolyticus (strain JCSC5402) (Macrococcoides caseolyticum), this protein is Large ribosomal subunit protein bL31B.